The primary structure comprises 442 residues: MYFRFGKGLQIQLRHSSKAVRSQLRWNSTTKLIKPIASTQHPFLVKPVTPHESYVSCTIFNEKGDVTAVSHKFPKWEFLQKYGLYPRDLRKIDSSTIDVIPSFVIKPKCILVNVLHIKAMIQKDKVFVFDTTNPDAAIKLGVLMYDLESKLSQRNINYQGKSVSYQENYEHRALESILINVMTCLETEYKYHHSVCGMILNDLENQIDRDKLRDLLIKSKTLTAFAQKSVLLRDLLDELLESDEDLAGMYLSEKKHPDADDHSDLEMLLETYYKQCDEYVQQSESLIQDIKSTEEIVNIILDANRNSLLLFELKVTVYTLGFTVATLVPAFYGMNLKNFIEDSNWGFASVVGLSVAAAAVVTITNMRALRSVTKLTLLNNHTGANNKKHLANAKLALDKEIPTFWDRWLTSARVLWSGREVLYKDGSKRDMIWKWLVDDDKK.

A mitochondrion-targeting transit peptide spans 1–15; the sequence is MYFRFGKGLQIQLRH. The chain crosses the membrane as a helical span at residues 308-328; that stretch reads LLLFELKVTVYTLGFTVATLV. Positions 332-335 match the YGMN motif; that stretch reads YGMN. The chain crosses the membrane as a helical span at residues 344–364; the sequence is NWGFASVVGLSVAAAAVVTIT.

It belongs to the CorA metal ion transporter (MIT) (TC 1.A.35) family. In terms of assembly, homopentamer. Forms homooligomers. Interacts with MFM1.

Its subcellular location is the mitochondrion inner membrane. In terms of biological role, high-conductance magnesium-selective channel that mediates the influx of magnesium into the mitochondrial matrix. Essential for the splicing of mRNA group II introns in mitochondria by affecting mitochondrial magnesium concentrations, which are critical for group II intron splicing. It also suppresses a variety of mitochondrial intron mutations and its absence may disturb the assembly of mitochondrial membrane complexes. The protein is Mitochondrial inner membrane magnesium transporter MRS2 (MRS2) of Kluyveromyces lactis (strain ATCC 8585 / CBS 2359 / DSM 70799 / NBRC 1267 / NRRL Y-1140 / WM37) (Yeast).